A 408-amino-acid chain; its full sequence is Imidazolonepropionase (408 aa).

Residues His-72 and His-74 each contribute to the Fe(3+) site. Residues His-72 and His-74 each contribute to the Zn(2+) site. Positions 81, 144, and 177 each coordinate 4-imidazolone-5-propanoate. Tyr-144 serves as a coordination point for N-formimidoyl-L-glutamate. His-242 contacts Fe(3+). His-242 serves as a coordination point for Zn(2+). Residue Gln-245 coordinates 4-imidazolone-5-propanoate. Asp-317 contributes to the Fe(3+) binding site. Asp-317 provides a ligand contact to Zn(2+). Residues Asn-319 and Gly-321 each coordinate N-formimidoyl-L-glutamate. Residue Thr-322 coordinates 4-imidazolone-5-propanoate.

The protein belongs to the metallo-dependent hydrolases superfamily. HutI family. Zn(2+) serves as cofactor. Fe(3+) is required as a cofactor.

Its subcellular location is the cytoplasm. The catalysed reaction is 4-imidazolone-5-propanoate + H2O = N-formimidoyl-L-glutamate. Its pathway is amino-acid degradation; L-histidine degradation into L-glutamate; N-formimidoyl-L-glutamate from L-histidine: step 3/3. In terms of biological role, catalyzes the hydrolytic cleavage of the carbon-nitrogen bond in imidazolone-5-propanoate to yield N-formimidoyl-L-glutamate. It is the third step in the universal histidine degradation pathway. In Aliivibrio fischeri (strain MJ11) (Vibrio fischeri), this protein is Imidazolonepropionase.